Here is a 384-residue protein sequence, read N- to C-terminus: Secreted LysM effector Blys7 (384 aa).

The first 18 residues, 1–18 (MQRHLLLGLAGLPALLSA), serve as a signal peptide directing secretion. One can recognise a LysM 1 domain in the interval 27-71 (FATVAANGETCDSMAATWGLDTATFQSLNPKAKCPEVIGGEQYCV). Residues 81–106 (EPTTAPATTSTQTTTTTTTEVTSTTV) are compositionally biased toward low complexity. Residues 81-112 (EPTTAPATTSTQTTTTTTTEVTSTTVPGNGIT) are disordered. Residues 127–173 (KFYFVNKGDNCADITARYNLDLSDFLEWNPKAGNSCSGLWANAYACV) enclose the LysM 2 domain. The disordered stretch occupies residues 183–206 (KPKPTSTSTKPPTATGNGIPTPLP). Over residues 186–195 (PTSTSTKPPT) the composition is skewed to low complexity. Residues 217–263 (KFYLVKPGETCADIASRNGVSLSDFLQWNPHAGNACSGLWANAYACL) form the LysM 3 domain.

This sequence belongs to the secreted LysM effector family.

Its function is as follows. Might have a role in sequestration of chitin oligosaccharides (breakdown products of fungal cell walls that are released during invasion and act as triggers of host immunity) to dampen host defense. This chain is Secreted LysM effector Blys7, found in Beauveria bassiana (strain ARSEF 2860) (White muscardine disease fungus).